Reading from the N-terminus, the 223-residue chain is Endo-1,4-beta-xylanase 2 (223 aa).

Positions 1 to 19 are cleaved as a signal peptide; that stretch reads MVSFTSLLAGVAAISGVLA. A propeptide spanning residues 20-33 is cleaved from the precursor; that stretch reads APAAEVESVAVEKR. A Pyrrolidone carboxylic acid modification is found at Q34. The region spanning 34-222 is the GH11 domain; it reads QTIQPGTGYN…FSSGSASITV (189 aa). 2 N-linked (GlcNAc...) asparagine glycosylation sites follow: N71 and N94. Positions 106 and 110 each coordinate substrate. The Nucleophile role is filled by E119. Substrate contacts are provided by Y121, R155, P159, Q169, and Y204. E210 serves as the catalytic Proton donor.

It belongs to the glycosyl hydrolase 11 (cellulase G) family.

The protein localises to the secreted. The enzyme catalyses Endohydrolysis of (1-&gt;4)-beta-D-xylosidic linkages in xylans.. The protein operates within glycan degradation; xylan degradation. Its function is as follows. Glycoside hydrolase involved in the hydrolysis of xylan, a major plant cell wall hemicellulose made up of 1,4-beta-linked D-xylopyranose residues. Catalyzes the endohydrolysis of the main-chain 1,4-beta-glycosidic bonds connecting the xylose subunits yielding various xylooligosaccharides and xylose. The catalysis proceeds by a double-displacement reaction mechanism with a putative covalent glycosyl-enzyme intermediate, with retention of the anomeric configuration. Produces xylobiose and xylose as the main degradation products. The polypeptide is Endo-1,4-beta-xylanase 2 (Hypocrea jecorina (strain ATCC 56765 / BCRC 32924 / NRRL 11460 / Rut C-30) (Trichoderma reesei)).